Here is an 871-residue protein sequence, read N- to C-terminus: Probable LRR receptor-like serine/threonine-protein kinase At1g51810 (871 aa).

The signal sequence occupies residues 1–20 (MERHCLFFVIFSLILHLVQA). Over 21-512 (QDPIGFINLD…GRQIKSMTIP (492 aa)) the chain is Extracellular. 11 N-linked (GlcNAc...) asparagine glycosylation sites follow: Asn-93, Asn-179, Asn-229, Asn-283, Asn-295, Asn-396, Asn-410, Asn-439, Asn-458, Asn-463, and Asn-489. LRR repeat units follow at residues 405–426 (IITS…TIQN), 429–449 (NLQE…EFLA), and 453–474 (SLLV…KLIE). A helical transmembrane segment spans residues 513 to 533 (IVASIGSVVAFTVALMIFCVV). At 534-871 (RKNNPSNDEA…FGTEVAPMAR (338 aa)) the chain is on the cytoplasmic side. Thr-568 bears the Phosphothreonine mark. A Protein kinase domain is found at 577 to 850 (NNFQKILGKG…QVVFELKECL (274 aa)). ATP contacts are provided by residues 583 to 591 (LGKGGFGIV) and Lys-605. Tyr-650 carries the phosphotyrosine modification. Asp-702 serves as the catalytic Proton acceptor. Residue Ser-736 is modified to Phosphoserine. Phosphothreonine occurs at positions 737 and 742. Tyr-750 is modified (phosphotyrosine).

The protein belongs to the protein kinase superfamily. Ser/Thr protein kinase family.

Its subcellular location is the membrane. The enzyme catalyses L-seryl-[protein] + ATP = O-phospho-L-seryl-[protein] + ADP + H(+). It catalyses the reaction L-threonyl-[protein] + ATP = O-phospho-L-threonyl-[protein] + ADP + H(+). The protein is Probable LRR receptor-like serine/threonine-protein kinase At1g51810 of Arabidopsis thaliana (Mouse-ear cress).